Consider the following 1872-residue polypeptide: Chitin synthase 6 (1872 aa).

The tract at residues 1–23 (MAQHLPPVGGNGGAHTQPSLPAL) is disordered. The region spanning 1 to 779 (MAQHLPPVGG…CWMEIAQLSD (779 aa)) is the Myosin motor domain. Position 104–111 (104–111 (GESGSGKT)) interacts with ATP. Asparagine 123, asparagine 291, asparagine 428, and asparagine 559 each carry an N-linked (GlcNAc...) asparagine glycan. A disordered region spans residues 587-652 (VMQASVSSKP…VNKPSEEGAS (66 aa)). Residues 659-683 (LDNVTKSFHAQNTNAYFVFCLKPND) are actin-binding. The N-linked (GlcNAc...) asparagine glycan is linked to asparagine 661. 2 consecutive transmembrane segments (helical) span residues 881 to 901 (WVFI…QHLG) and 920 to 940 (FIIW…PMLV). Positions 944–1003 (QYVFTGEELSAYNGKDGKASYAAIRGQVFDIGSFIPRHPLPYLPSKLFTQYAGTDITGLF) constitute a Cytochrome b5 heme-binding domain. N-linked (GlcNAc...) asparagine glycans are attached at residues asparagine 1030, asparagine 1055, and asparagine 1120. A helical transmembrane segment spans residues 1193-1213 (FILAVTIILCSIIAFKFLAAL). N-linked (GlcNAc...) asparagine glycans are attached at residues asparagine 1450 and asparagine 1556. Helical transmembrane passes span 1581–1601 (FIVF…AYIV), 1614–1634 (VPVL…IIFI), and 1641–1661 (MIAW…GLPL). Residues 1814–1869 (LPSDDALLAEIREILRTADLMTVTKKGVKQELERRFGVNLDSRRAYINSATEALLS) enclose the DEK-C domain.

The protein belongs to the chitin synthase family. Class V subfamily.

The protein localises to the cell membrane. It catalyses the reaction [(1-&gt;4)-N-acetyl-beta-D-glucosaminyl](n) + UDP-N-acetyl-alpha-D-glucosamine = [(1-&gt;4)-N-acetyl-beta-D-glucosaminyl](n+1) + UDP + H(+). Polymerizes chitin, a structural polymer of the cell wall and septum, by transferring the sugar moiety of UDP-GlcNAc to the non-reducing end of the growing chitin polymer. Required for appressorium penetration and invasive growth. This Pyricularia oryzae (strain 70-15 / ATCC MYA-4617 / FGSC 8958) (Rice blast fungus) protein is Chitin synthase 6.